We begin with the raw amino-acid sequence, 114 residues long: Hydrogenase maturation factor HypA (114 aa).

Position 2 (His2) interacts with Ni(2+). Zn(2+) contacts are provided by Cys73, Cys76, Cys89, and Cys92.

It belongs to the HypA/HybF family.

Functionally, involved in the maturation of [NiFe] hydrogenases. Required for nickel insertion into the metal center of the hydrogenase. The polypeptide is Hydrogenase maturation factor HypA (Azoarcus sp. (strain BH72)).